A 205-amino-acid polypeptide reads, in one-letter code: dTTP/UTP pyrophosphatase (205 aa).

Asp-81 serves as the catalytic Proton acceptor.

This sequence belongs to the Maf family. YhdE subfamily. The cofactor is a divalent metal cation.

It localises to the cytoplasm. The enzyme catalyses dTTP + H2O = dTMP + diphosphate + H(+). The catalysed reaction is UTP + H2O = UMP + diphosphate + H(+). Its function is as follows. Nucleoside triphosphate pyrophosphatase that hydrolyzes dTTP and UTP. May have a dual role in cell division arrest and in preventing the incorporation of modified nucleotides into cellular nucleic acids. This is dTTP/UTP pyrophosphatase from Agathobacter rectalis (strain ATCC 33656 / DSM 3377 / JCM 17463 / KCTC 5835 / VPI 0990) (Eubacterium rectale).